We begin with the raw amino-acid sequence, 231 residues long: Sporulation protein RMD6 (231 aa).

Its subcellular location is the peroxisome. Functionally, required for sporulation. Required for meiotic nuclear division. The polypeptide is Sporulation protein RMD6 (RMD6) (Saccharomyces cerevisiae (strain ATCC 204508 / S288c) (Baker's yeast)).